Here is a 54-residue protein sequence, read N- to C-terminus: RRRRRRGKGKGGKKKKGKKRRRRGRKGKGKGKKKGKRKGKRGGKRRRRRRKGKK.

Residues 1–54 (RRRRRRGKGKGGKKKKGKKRRRRGRKGKGKGKKKGKRKGKRGGKRRRRRRKGKK) form a disordered region.

As to expression, gonads.

The protein localises to the nucleus. It is found in the chromosome. In terms of biological role, protamines substitute for histones in the chromatin of sperm during the haploid phase of spermatogenesis. They compact sperm DNA into a highly condensed, stable and inactive complex. The chain is Sperm protamine P3 from Bolinus brandaris (Purple dye murex).